The chain runs to 935 residues: Progesterone receptor (935 aa).

Residues 1–164 (MTELKAKGPR…PATQRVLSPL (164 aa)) form an AF3; mediates transcriptional activation region. The disordered stretch occupies residues 1–256 (MTELKAKGPR…AAAGGGAAAV (256 aa)). The segment at 1-568 (MTELKAKGPR…YSFESLPQKI (568 aa)) is modulating, Pro-Rich. Residue Ser-20 is modified to Phosphoserine. The short motif at 55-59 (LDGLL) is the LXXL motif 1 element. Ser-81 is modified (phosphoserine). Positions 115–119 (LDTLL) match the LXXL motif 2 motif. Phosphoserine is present on residues Ser-130 and Ser-162. A mediates transcriptional transrepression region spans residues 165-305 (MSRSGGKAGD…LATTTMDFTH (141 aa)). The Nuclear localization signal signature appears at 183 to 187 (KVLPR). Residues Ser-190 and Ser-213 each carry the phosphoserine modification. The span at 220 to 231 (EVEEEDGSESED) shows a compositional bias: acidic residues. Over residues 232–246 (SAGPLLKGKPRALGG) the composition is skewed to low complexity. The residue at position 294 (Ser-294) is a Phosphoserine; by MAPK1. The disordered stretch occupies residues 328-353 (SYDGGAGAASAFAPPRSSPSASSTPV). Low complexity predominate over residues 335 to 350 (AASAFAPPRSSPSASS). Ser-345 is subject to Phosphoserine; by MAPK. Residue Lys-388 forms a Glycyl lysine isopeptide (Lys-Gly) (interchain with G-Cter in SUMO); alternate linkage. Lys-388 is covalently cross-linked (Glycyl lysine isopeptide (Lys-Gly) (interchain with G-Cter in ubiquitin); alternate). The residue at position 400 (Ser-400) is a Phosphoserine; by CDK2. Positions 415–452 (PDFPLGPPPPLPPRAPPSRPGEAAVTAAPAGASVSSAS) are disordered. Residues 418 to 433 (PLGPPPPLPPRAPPSR) show a composition bias toward pro residues. The segment covering 434 to 452 (PGEAAVTAAPAGASVSSAS) has biased composition (low complexity). The tract at residues 456 to 548 (STLECILYKA…VYPPYLNYLR (93 aa)) is AF1; mediates transcriptional activation. Lys-533 participates in a covalent cross-link: Glycyl lysine isopeptide (Lys-Gly) (interchain with G-Cter in SUMO). NR C4-type zinc fingers lie at residues 569–589 (CLICGDEASGCHYGVLTCGSC) and 605–629 (CAGRNDCIVDKIRRKNCPACRLRKC). Positions 569–641 (CLICGDEASG…AGMVLGGRKF (73 aa)) form a DNA-binding region, nuclear receptor. Ser-678 bears the Phosphoserine mark. Positions 681 to 915 (QDIQLIPPLI…EFPEMMSEVI (235 aa)) constitute an NR LBD domain. The tract at residues 689–935 (LINLLVSIEP…MVKPLLFHKK (247 aa)) is AF2; mediates transcriptional activation. Arg-768 provides a ligand contact to progesterone.

Belongs to the nuclear hormone receptor family. Interacts with SMARD1 and UNC45A. Interacts with CUEDC2; the interaction promotes ubiquitination, decreases sumoylation, and represses transcriptional activity. Interacts with PIAS3; the interaction promotes sumoylation of PR in a hormone-dependent manner, inhibits DNA-binding, and alters nuclear export. Interacts with SP1; the interaction requires ligand-induced phosphorylation on Ser-345 by ERK1/2-MAPK. Interacts with PRMT2. Interacts with NCOA2 and NCOA1. Interacts with KLF9. Interacts with GTF2B. Post-translationally, phosphorylated on multiple serine sites. Several of these sites are hormone-dependent. Phosphorylation on Ser-294 is highly hormone-dependent and modulates ubiquitination and sumoylation on Lys-388. Phosphorylation on Ser-345 also requires induction by hormone. Basal phosphorylation on Ser-81, Ser-162, Ser-190 and Ser-400 is increased in response to progesterone and can be phosphorylated in vitro by the CDK2-A1 complex. Increased levels of phosphorylation on Ser-400 also in the presence of EGF, heregulin, IGF, PMA and FBS. Phosphorylation at this site by CDK2 is ligand-independent, and increases nuclear translocation and transcriptional activity. Phosphorylation at Ser-162 and Ser-294, but not at Ser-190, is impaired during the G(2)/M phase of the cell cycle. Phosphorylation on Ser-345 by ERK1/2 MAPK is required for interaction with SP1. In terms of processing, sumoylation is hormone-dependent and represses transcriptional activity. Sumoylation on all three sites is enhanced by PIAS3. Desumoylated by SENP1. Sumoylation on Lys-388, the main site of sumoylation, is repressed by ubiquitination on the same site, and modulated by phosphorylation at Ser-294. Ubiquitination is hormone-dependent and represses sumoylation on the same site. Promoted by MAPK-mediated phosphorylation on Ser-294. Ubiquitinated by UBR5, leading to its degradation: UBR5 specifically recognizes and binds ligand-bound PGR when it is not associated with coactivators (NCOAs). In presence of NCOAs, the UBR5-degron is not accessible, preventing its ubiquitination and degradation. Post-translationally, palmitoylated by ZDHHC7 and ZDHHC21. Palmitoylation is required for plasma membrane targeting and for rapid intracellular signaling via ERK and AKT kinases and cAMP generation.

It is found in the nucleus. The protein localises to the cytoplasm. Functionally, the steroid hormones and their receptors are involved in the regulation of eukaryotic gene expression and affect cellular proliferation and differentiation in target tissues. Transcriptional activator of several progesteron-dependent promoters in a variety of cell types. Involved in activation of SRC-dependent MAPK signaling on hormone stimulation. This Macaca sylvanus (Barbary macaque) protein is Progesterone receptor (PGR).